Reading from the N-terminus, the 269-residue chain is Type II methyltransferase M2.LlaDCHI (269 aa).

This sequence belongs to the N(4)/N(6)-methyltransferase family.

It catalyses the reaction a 2'-deoxyadenosine in DNA + S-adenosyl-L-methionine = an N(6)-methyl-2'-deoxyadenosine in DNA + S-adenosyl-L-homocysteine + H(+). A beta subtype methylase, recognizes the double-stranded sequence 5'-GATC-3', methylates A-2 on both strands, and protects the DNA from cleavage by the LlaDCHI endonuclease. This chain is Type II methyltransferase M2.LlaDCHI, found in Lactococcus lactis subsp. cremoris (Streptococcus cremoris).